Consider the following 32-residue polypeptide: Corticostatin-related peptide RK-1 (32 aa).

3 disulfide bridges follow: Cys-3/Cys-29, Cys-5/Cys-19, and Cys-9/Cys-28.

It localises to the secreted. Its function is as follows. Has antimicrobial activity against E.coli and activates ion channel activity. The chain is Corticostatin-related peptide RK-1 from Oryctolagus cuniculus (Rabbit).